A 354-amino-acid chain; its full sequence is Uroporphyrinogen decarboxylase (354 aa).

Substrate is bound by residues 27 to 31 (RQAGR), Asp77, Tyr154, Thr209, and His327.

Belongs to the uroporphyrinogen decarboxylase family. As to quaternary structure, homodimer.

Its subcellular location is the cytoplasm. It carries out the reaction uroporphyrinogen III + 4 H(+) = coproporphyrinogen III + 4 CO2. It functions in the pathway porphyrin-containing compound metabolism; protoporphyrin-IX biosynthesis; coproporphyrinogen-III from 5-aminolevulinate: step 4/4. Its function is as follows. Catalyzes the decarboxylation of four acetate groups of uroporphyrinogen-III to yield coproporphyrinogen-III. This is Uroporphyrinogen decarboxylase from Actinobacillus succinogenes (strain ATCC 55618 / DSM 22257 / CCUG 43843 / 130Z).